The primary structure comprises 789 residues: Protein translocase subunit SecA (789 aa).

Residues Gln85, 103 to 107, and Asp492 each bind ATP; that span reads GEGKT.

It belongs to the SecA family. In terms of assembly, monomer and homodimer. Part of the essential Sec protein translocation apparatus which comprises SecA, SecYEG and auxiliary proteins SecDF. Other proteins may also be involved.

The protein localises to the cell membrane. Its subcellular location is the cytoplasm. It carries out the reaction ATP + H2O + cellular proteinSide 1 = ADP + phosphate + cellular proteinSide 2.. In terms of biological role, part of the Sec protein translocase complex. Interacts with the SecYEG preprotein conducting channel. Has a central role in coupling the hydrolysis of ATP to the transfer of proteins into and across the cell membrane, serving as an ATP-driven molecular motor driving the stepwise translocation of polypeptide chains across the membrane. This Limosilactobacillus fermentum (strain NBRC 3956 / LMG 18251) (Lactobacillus fermentum) protein is Protein translocase subunit SecA.